The following is a 230-amino-acid chain: Cytochrome c oxidase subunit 2 (230 aa).

Residues 1–14 (MAHPTQLGFQDAAS) are Mitochondrial intermembrane-facing. The helical transmembrane segment at 15–45 (PVMEELLHFHDHALMIVFLISTLVLYIIIAM) threads the bilayer. The Mitochondrial matrix portion of the chain corresponds to 46–59 (VSTKLTNKYILDSQ). Residues 60–87 (EIEIVWTILPAVILVLIALPSLRILYLM) traverse the membrane as a helical segment. Over 88–230 (DEINDPHLTI…NWSSLMLEDA (143 aa)) the chain is Mitochondrial intermembrane. Cu cation-binding residues include histidine 161, cysteine 196, glutamate 198, cysteine 200, histidine 204, and methionine 207. Residue glutamate 198 coordinates Mg(2+).

The protein belongs to the cytochrome c oxidase subunit 2 family. In terms of assembly, component of the cytochrome c oxidase (complex IV, CIV), a multisubunit enzyme composed of 14 subunits. The complex is composed of a catalytic core of 3 subunits MT-CO1, MT-CO2 and MT-CO3, encoded in the mitochondrial DNA, and 11 supernumerary subunits COX4I, COX5A, COX5B, COX6A, COX6B, COX6C, COX7A, COX7B, COX7C, COX8 and NDUFA4, which are encoded in the nuclear genome. The complex exists as a monomer or a dimer and forms supercomplexes (SCs) in the inner mitochondrial membrane with NADH-ubiquinone oxidoreductase (complex I, CI) and ubiquinol-cytochrome c oxidoreductase (cytochrome b-c1 complex, complex III, CIII), resulting in different assemblies (supercomplex SCI(1)III(2)IV(1) and megacomplex MCI(2)III(2)IV(2)). Found in a complex with TMEM177, COA6, COX18, COX20, SCO1 and SCO2. Interacts with TMEM177 in a COX20-dependent manner. Interacts with COX20. Interacts with COX16. It depends on Cu cation as a cofactor.

The protein localises to the mitochondrion inner membrane. The catalysed reaction is 4 Fe(II)-[cytochrome c] + O2 + 8 H(+)(in) = 4 Fe(III)-[cytochrome c] + 2 H2O + 4 H(+)(out). Component of the cytochrome c oxidase, the last enzyme in the mitochondrial electron transport chain which drives oxidative phosphorylation. The respiratory chain contains 3 multisubunit complexes succinate dehydrogenase (complex II, CII), ubiquinol-cytochrome c oxidoreductase (cytochrome b-c1 complex, complex III, CIII) and cytochrome c oxidase (complex IV, CIV), that cooperate to transfer electrons derived from NADH and succinate to molecular oxygen, creating an electrochemical gradient over the inner membrane that drives transmembrane transport and the ATP synthase. Cytochrome c oxidase is the component of the respiratory chain that catalyzes the reduction of oxygen to water. Electrons originating from reduced cytochrome c in the intermembrane space (IMS) are transferred via the dinuclear copper A center (CU(A)) of subunit 2 and heme A of subunit 1 to the active site in subunit 1, a binuclear center (BNC) formed by heme A3 and copper B (CU(B)). The BNC reduces molecular oxygen to 2 water molecules using 4 electrons from cytochrome c in the IMS and 4 protons from the mitochondrial matrix. The polypeptide is Cytochrome c oxidase subunit 2 (mt-co2) (Carassius auratus (Goldfish)).